A 208-amino-acid polypeptide reads, in one-letter code: Uracil phosphoribosyltransferase (208 aa).

5-phospho-alpha-D-ribose 1-diphosphate contacts are provided by residues arginine 78, arginine 103, and 130-138 (DPMLATGGS). Uracil-binding positions include isoleucine 193 and 198–200 (GDA). Aspartate 199 lines the 5-phospho-alpha-D-ribose 1-diphosphate pocket.

It belongs to the UPRTase family. Requires Mg(2+) as cofactor.

The catalysed reaction is UMP + diphosphate = 5-phospho-alpha-D-ribose 1-diphosphate + uracil. It functions in the pathway pyrimidine metabolism; UMP biosynthesis via salvage pathway; UMP from uracil: step 1/1. Allosterically activated by GTP. Its function is as follows. Catalyzes the conversion of uracil and 5-phospho-alpha-D-ribose 1-diphosphate (PRPP) to UMP and diphosphate. This chain is Uracil phosphoribosyltransferase, found in Haemophilus ducreyi (strain 35000HP / ATCC 700724).